The chain runs to 278 residues: Large ribosomal subunit protein uL2 (278 aa).

The interval 222 to 278 is disordered; it reads GVVMNPIDHPHGGGEGRTSGGRHPVTPWGKPTKGKKTRSNKSTDKFILISRHKRKKK.

Belongs to the universal ribosomal protein uL2 family. As to quaternary structure, part of the 50S ribosomal subunit. Forms a bridge to the 30S subunit in the 70S ribosome.

Functionally, one of the primary rRNA binding proteins. Required for association of the 30S and 50S subunits to form the 70S ribosome, for tRNA binding and peptide bond formation. It has been suggested to have peptidyltransferase activity; this is somewhat controversial. Makes several contacts with the 16S rRNA in the 70S ribosome. This Rhodopseudomonas palustris (strain BisB5) protein is Large ribosomal subunit protein uL2.